The following is a 661-amino-acid chain: Envelope glycoprotein (661 aa).

A signal peptide spans 1 to 33; sequence MEGPAFSKSPKDKTIERAFLGVLGILFVTGGLA. The interval 32-267 is receptor-binding domain (RBD); that stretch reads LASRDNPHQV…KVTDLGPRVP (236 aa). Residues 34-606 lie on the Extracellular side of the membrane; that stretch reads SRDNPHQVYN…FNRSPWFTTL (573 aa). N43 carries N-linked (GlcNAc...) asparagine; by host glycosylation. Intrachain disulfides connect C77-C129, C103-C118, C104-C114, C152-C172, and C164-C177. A Zn(2+)-binding site is contributed by H86. A Zn(2+)-binding site is contributed by D117. The N-linked (GlcNAc...) asparagine; by host glycan is linked to N199. A disulfide bond links C209 and C215. Positions 268-308 are disordered; the sequence is IGPNPVLSDQRPPSRPVPARPPPPSASPSTPTIPPQQGTGD. The segment covering 280–301 has biased composition (pro residues); that stretch reads PSRPVPARPPPPSASPSTPTIP. A glycan (N-linked (GlcNAc...) asparagine; by host) is linked at N322. 6 disulfides stabilise this stretch: C332–C335, C332–C559, C362–C416, C381–C393, C423–C436, and C551–C558. Residues 332 to 335 carry the CXXC motif; the sequence is CWLC. An N-linked (GlcNAc...) asparagine; by host glycan is attached at N361. 2 N-linked (GlcNAc...) asparagine; by host glycosylation sites follow: N394 and N430. The tract at residues 468–488 is fusion peptide; that stretch reads VSLTLALLPEGLTMGGIAAGV. A coiled-coil region spans residues 497 to 533; that stretch reads ATQQFQQLQAAMHNDLKEVEKSITNLEKSLTSLSEVV. The tract at residues 534 to 550 is immunosuppression; it reads LQNRRGLDLLFLKEGGL. Residues 551 to 559 carry the CX6CC motif; it reads CAALKEECC. Residues 607–627 form a helical membrane-spanning segment; the sequence is ISTIMGPLIVLLLILLFGPCI. C626 is lipidated: S-palmitoyl cysteine; by host. The Cytoplasmic portion of the chain corresponds to 628–661; it reads LNRLVQFVKDRISVVQALVLTQQYHQLKPIEYEP. The YXXL motif; contains endocytosis signal signature appears at 651-654; it reads YHQL.

As to quaternary structure, the mature envelope protein (Env) consists of a trimer of SU-TM heterodimers attached by a labile interchain disulfide bond. In terms of processing, specific enzymatic cleavages in vivo yield mature proteins. Envelope glycoproteins are synthesized as an inactive precursor that is N-glycosylated and processed likely by host cell furin or by a furin-like protease in the Golgi to yield the mature SU and TM proteins. The cleavage site between SU and TM requires the minimal sequence [KR]-X-[KR]-R. The R-peptide is released from the C-terminus of the cytoplasmic tail of the TM protein upon particle formation as a result of proteolytic cleavage by the viral protease. Cleavage of this peptide is required for TM to become fusogenic. The CXXC motif is highly conserved across a broad range of retroviral envelope proteins. It is thought to participate in the formation of a labile disulfide bond possibly with the CX6CC motif present in the transmembrane protein. Isomerization of the intersubunit disulfide bond to an SU intrachain disulfide bond is thought to occur upon receptor recognition in order to allow membrane fusion. Post-translationally, the transmembrane protein is palmitoylated. In terms of processing, the R-peptide is palmitoylated.

It is found in the virion membrane. The protein resides in the host cell membrane. Its function is as follows. The surface protein (SU) attaches the virus to the host cell by binding to its receptor. This interaction triggers the refolding of the transmembrane protein (TM) and is thought to activate its fusogenic potential by unmasking its fusion peptide. Fusion occurs at the host cell plasma membrane. Functionally, the transmembrane protein (TM) acts as a class I viral fusion protein. Under the current model, the protein has at least 3 conformational states: pre-fusion native state, pre-hairpin intermediate state, and post-fusion hairpin state. During viral and target cell membrane fusion, the coiled coil regions (heptad repeats) assume a trimer-of-hairpins structure, positioning the fusion peptide in close proximity to the C-terminal region of the ectodomain. The formation of this structure appears to drive apposition and subsequent fusion of viral and target cell membranes. Membranes fusion leads to delivery of the nucleocapsid into the cytoplasm. In Mus musculus (Mouse), this protein is Envelope glycoprotein (env).